Reading from the N-terminus, the 136-residue chain is Transcription antitermination protein NusB (136 aa).

The protein belongs to the NusB family.

Functionally, involved in transcription antitermination. Required for transcription of ribosomal RNA (rRNA) genes. Binds specifically to the boxA antiterminator sequence of the ribosomal RNA (rrn) operons. This Treponema denticola (strain ATCC 35405 / DSM 14222 / CIP 103919 / JCM 8153 / KCTC 15104) protein is Transcription antitermination protein NusB.